The primary structure comprises 237 residues: tRNA1(Val) (adenine(37)-N6)-methyltransferase (237 aa).

It belongs to the methyltransferase superfamily. tRNA (adenine-N(6)-)-methyltransferase family.

The protein localises to the cytoplasm. It catalyses the reaction adenosine(37) in tRNA1(Val) + S-adenosyl-L-methionine = N(6)-methyladenosine(37) in tRNA1(Val) + S-adenosyl-L-homocysteine + H(+). Its function is as follows. Specifically methylates the adenine in position 37 of tRNA(1)(Val) (anticodon cmo5UAC). This Parabacteroides distasonis (strain ATCC 8503 / DSM 20701 / CIP 104284 / JCM 5825 / NCTC 11152) protein is tRNA1(Val) (adenine(37)-N6)-methyltransferase.